A 138-amino-acid chain; its full sequence is Large ribosomal subunit protein uL16 (138 aa).

Positions 1-13 (MLQPKRRKYRKEQ) are enriched in basic residues. The disordered stretch occupies residues 1-24 (MLQPKRRKYRKEQKGRNTGKATRG).

It belongs to the universal ribosomal protein uL16 family. In terms of assembly, part of the 50S ribosomal subunit.

Its function is as follows. Binds 23S rRNA and is also seen to make contacts with the A and possibly P site tRNAs. The chain is Large ribosomal subunit protein uL16 from Burkholderia ambifaria (strain ATCC BAA-244 / DSM 16087 / CCUG 44356 / LMG 19182 / AMMD) (Burkholderia cepacia (strain AMMD)).